The sequence spans 509 residues: Flotillin-like protein FloT (509 aa).

Topologically, residues 1–3 (MTM) are cytoplasmic. An intramembrane segment occupies 4–24 (PIIMIIGVVFFLLIALIAVFI). Residues 25-509 (TKYRTAGPDE…KEAKTIQKSE (485 aa)) lie on the Cytoplasmic side of the membrane. Positions 119–301 (AAEQFLGKSK…KIIERQKQIE (183 aa)) are PHB domain. The required for correct localization stretch occupies residues 203–509 (RIAQVKRDAD…KEAKTIQKSE (307 aa)). 4 short sequence motifs (EA repeat) span residues 342 to 344 (AEA), 357 to 360 (AEAE), 370 to 373 (AEAE), and 390 to 394 (AEAEA). Positions 485-509 (KGNVKQSINELTNEIKEAKTIQKSE) are not required for correct localization.

It belongs to the band 7/mec-2 family. Flotillin subfamily. Homooligomerizes. Oligomerizes in very large complexes in vitro. Interacts with FloA, FtsH, FtsX, OppA, SdhA and SecY in detergent-resistant membrane (DRM) fractions. Interacts with FtsH at midcell. Interacts with FloA. Interacts in vivo with KinC, FloA, FtsH and ResE. Interacts with ResE, colocalizes with ResE in FloT-only membrane rafts. Another study shows nearly complete colocalization with NfeD2, but only minor colocalization with FtsH or KinC.

The protein resides in the cell membrane. It is found in the membrane raft. Functionally, found in functional membrane microdomains (FMM) that may be equivalent to eukaryotic membrane rafts. FMMs are highly dynamic and increase in number as cells age. FloA and FloT function is partially redundant; double deletions have marked synthetic phenotypes. Flotillins are thought to be important factors in membrane fluidity, especially during periods of rapid growth in rich media. Whether specific proteins are associated with FMMs is controversial; in one study FloT rafts have been shown to include proteins involved in adaptation to stationary phase, while FloA-FloT rafts include proteins involved in differentiation including sporulation, biofilm formation and DNA uptake competence. Another (more finely resolved) study only showed association of NfeD2 with FloT rafts of all the proteins examined. Aids homooligomerization of KinC and KinD but not KinB, may prevent incorrect hetero-association of the above kinases. Simultaneous overexpression of both FloA and FloT leads to defects in cell division and differentiation, in part caused by stabilization of FtsH and its subsequent increased ability to degrade proteins. Cells make more biofilm, are about half as long, have less EzrA and more frequent Z-rings. Involved in spatial organization of membranes, perhaps recruiting proteins (e.g. NfeD2) to specific membrane regions. Plays a role in phosphorylation of master regulator Spo0A, an early sporulation event. Plays a non-redundant role with dynamin-like protein A (dynA) in membrane dynamics and cell shape. The polypeptide is Flotillin-like protein FloT (Bacillus subtilis (strain 168)).